Consider the following 1401-residue polypeptide: DNA-directed RNA polymerase subunit beta (1401 aa).

This sequence belongs to the RNA polymerase beta chain family. As to quaternary structure, the RNAP catalytic core consists of 2 alpha, 1 beta, 1 beta' and 1 omega subunit. When a sigma factor is associated with the core the holoenzyme is formed, which can initiate transcription.

The enzyme catalyses RNA(n) + a ribonucleoside 5'-triphosphate = RNA(n+1) + diphosphate. In terms of biological role, DNA-dependent RNA polymerase catalyzes the transcription of DNA into RNA using the four ribonucleoside triphosphates as substrates. The sequence is that of DNA-directed RNA polymerase subunit beta from Desulforapulum autotrophicum (strain ATCC 43914 / DSM 3382 / VKM B-1955 / HRM2) (Desulfobacterium autotrophicum).